The sequence spans 414 residues: Serine/threonine transporter SstT (414 aa).

Over 2 to 15 the chain is Cytoplasmic; it reads TTQRSPGLFRRLAH. A helical transmembrane segment spans residues 16-36; it reads GSLVKQILVGLVLGILLAWIS. Residues 37 to 45 lie on the Periplasmic side of the membrane; it reads KPAAEAVGL. The helical transmembrane segment at 46 to 66 threads the bilayer; sequence LGTLFVGALKAVAPILVLMLV. Over 67-83 the chain is Cytoplasmic; it reads MASIANHQHGQKTNIRP. A helical membrane pass occupies residues 84–104; the sequence is ILFLYLLGTFSAALAAVVFSF. Topologically, residues 105–142 are periplasmic; sequence AFPSTLHLSSSAGDISPPSGIVEVMRGLVMSMVSNPID. The helical transmembrane segment at 143–163 threads the bilayer; that stretch reads ALLKGNYIGILVWAIGLGFAL. The Cytoplasmic portion of the chain corresponds to 164 to 179; it reads RHGNETTKNLVNDMSN. Residues 180–200 form a helical membrane-spanning segment; that stretch reads AVTFMVKLVIRFAPFGIFGLV. The Periplasmic portion of the chain corresponds to 201–217; sequence SSTLATTGFSTLWGYAQ. Residues 218–238 traverse the membrane as a helical segment; sequence LLVVLVGCMLLVALVVNPLLV. At 239-299 the chain is on the cytoplasmic side; that stretch reads WWKIRRNPFP…VSIPLGATIN (61 aa). The chain crosses the membrane as a helical span at residues 300–320; that stretch reads MAGAAITITVLTLAAVNTLGI. Topologically, residues 321-331 are periplasmic; sequence PVDLPTALLLS. A helical transmembrane segment spans residues 332 to 352; that stretch reads VVASLCACGASGVAGGSLLLI. Residues 353–414 lie on the Cytoplasmic side of the membrane; sequence PLACNMFGIS…DRLANSALRN (62 aa).

Belongs to the dicarboxylate/amino acid:cation symporter (DAACS) (TC 2.A.23) family.

The protein localises to the cell inner membrane. The catalysed reaction is L-serine(in) + Na(+)(in) = L-serine(out) + Na(+)(out). It carries out the reaction L-threonine(in) + Na(+)(in) = L-threonine(out) + Na(+)(out). Functionally, involved in the import of serine and threonine into the cell, with the concomitant import of sodium (symport system). This chain is Serine/threonine transporter SstT, found in Shigella flexneri.